The following is a 127-amino-acid chain: Glycine cleavage system H protein (127 aa).

Positions 24 to 105 constitute a Lipoyl-binding domain; it reads TAVVGITDFA…YNEGWIVKMK (82 aa). Residue Lys-65 is modified to N6-lipoyllysine.

This sequence belongs to the GcvH family. The glycine cleavage system is composed of four proteins: P, T, L and H. The cofactor is (R)-lipoate.

Functionally, the glycine cleavage system catalyzes the degradation of glycine. The H protein shuttles the methylamine group of glycine from the P protein to the T protein. The sequence is that of Glycine cleavage system H protein from Chlorobaculum parvum (strain DSM 263 / NCIMB 8327) (Chlorobium vibrioforme subsp. thiosulfatophilum).